Here is a 465-residue protein sequence, read N- to C-terminus: Cysteine--tRNA ligase (465 aa).

Cys28 contacts Zn(2+). The 'HIGH' region signature appears at 30-40 (PTVYNYIHIGN). Zn(2+) is bound by residues Cys208, His233, and Glu237. The 'KMSKS' region motif lies at 265 to 269 (KMSKS). ATP is bound at residue Lys268.

This sequence belongs to the class-I aminoacyl-tRNA synthetase family. As to quaternary structure, monomer. It depends on Zn(2+) as a cofactor.

The protein resides in the cytoplasm. The catalysed reaction is tRNA(Cys) + L-cysteine + ATP = L-cysteinyl-tRNA(Cys) + AMP + diphosphate. This chain is Cysteine--tRNA ligase, found in Exiguobacterium sibiricum (strain DSM 17290 / CCUG 55495 / CIP 109462 / JCM 13490 / 255-15).